The sequence spans 274 residues: Kit ligand (274 aa).

Positions Met-1 to Thr-25 are cleaved as a signal peptide. Residues Lys-26–Gln-215 are Extracellular-facing. 2 disulfide bridges follow: Cys-29–Cys-114 and Cys-68–Cys-164. N-linked (GlcNAc...) asparagine glycosylation is found at Asn-90, Asn-97, Asn-145, and Asn-196. A helical membrane pass occupies residues Trp-216 to Trp-238. Over Lys-239 to Val-274 the chain is Cytoplasmic.

This sequence belongs to the SCF family. As to quaternary structure, homodimer, non-covalently linked. In terms of processing, a soluble form is produced by proteolytic processing of isoform 1 in the extracellular domain.

The protein localises to the cell membrane. Its subcellular location is the secreted. It is found in the cytoplasm. It localises to the cytoskeleton. The protein resides in the cell projection. The protein localises to the lamellipodium. Its subcellular location is the filopodium. Functionally, stimulates the proliferation of mast cells. Able to augment the proliferation of both myeloid and lymphoid hematopoietic progenitors in bone marrow culture. Also mediates cell-cell adhesion. Acts synergistically with other cytokines, probably interleukins. The protein is Kit ligand (KITLG) of Felis catus (Cat).